The sequence spans 445 residues: Competence protein E (445 aa).

An N-terminal signal peptide occupies residues 1 to 23 (MKKYFLKCGYFLVCFCLPLIVFA).

The protein belongs to the bacterial secretin family. PilQ subfamily.

It localises to the cell outer membrane. Functionally, involved in transformation (genetic competence for DNA uptake). The sequence is that of Competence protein E (comE) from Haemophilus influenzae (strain ATCC 51907 / DSM 11121 / KW20 / Rd).